A 150-amino-acid polypeptide reads, in one-letter code: Detocs response regulatory protein DtcB (150 aa).

The 149-residue stretch at 2–150 (KILIADDNIQ…TDLIKKITEL (149 aa)) folds into the Response regulatory domain. 4-aspartylphosphate is present on D54.

Post-translationally, probably phosphorylated by DtcA.

Possible phosphate scavenger member of the two-component regulatory system Detocs that confers resistance to bacteriophage. When the system (DtcA-DtcB-DtcC) is expressed in a susceptible E.coli (strain MG1655) it confers resistance to bacteriophages T2, T4, T5, T7, SECphi4, SECphi6 and SECphi27; the level of resistance varies, resistance to T2, T7 and SECphi4 is not very high. DtcA probably autophosphorylates upon sensing viral infection, and subsequently transfers the phosphate signal to DtcC which activates it, leading to an antiviral defense; DtcB (this subunit) may scavenge phosphorylation signals from accidental activation of DtcA. In Enterobacter cloacae (strain JD6301), this protein is Detocs response regulatory protein DtcB.